The following is a 399-amino-acid chain: L-2-hydroxyglutarate dehydrogenase (399 aa).

Belongs to the L2HGDH family. The cofactor is FAD.

It carries out the reaction (S)-2-hydroxyglutarate + A = 2-oxoglutarate + AH2. Catalyzes the dehydrogenation of L-2-hydroxyglutarate (L2HG or(S)-2-hydroxyglutarate) to 2-oxoglutarate (alpha-ketoglutarate). Active in vitro with the artificial electron acceptor 2,6-dichlorophenolindophenol (DCPIP). Also displays a very low oxidase activity in vitro on L-2-hydroxyglutarate with O2 as the electron acceptor, but this activity is most likely not physiological. In Indibacter alkaliphilus (strain CCUG 57479 / KCTC 22604 / LW1), this protein is L-2-hydroxyglutarate dehydrogenase.